The primary structure comprises 1017 residues: Nonsense-mediated mRNA decay factor SMG5 (1017 aa).

Serine 2 is modified (N-acetylserine). Phosphoserine is present on residues serine 2 and serine 423. Disordered regions lie at residues 406–562 (GENP…PSEA) and 597–640 (TEPN…CRNE). Residues 448-467 (KSRKHSRLSCLRRRRRHHPP) show a composition bias toward basic residues. Over residues 486 to 496 (DSAQASDGSDS) the composition is skewed to low complexity. Residues 620 to 629 (ASEDGSESEG) show a composition bias toward acidic residues. Residues 798-842 (AQSEQESLLQQAQAQFRMAEEEARRNRLMRDMAQLRLQLEVSQLE) adopt a coiled-coil conformation. Residues 873–996 (RQLATSGRFI…GPMQAALQAA (124 aa)) form the PINc domain.

As to quaternary structure, interacts with TERT, PPP2CA and SMG1. Part of a complex that contains SMG1, SMG5, SMG7, PPP2CA, a short isoform of UPF3A (isoform UPF3AS, but not isoform UPF3AL) and phosphorylated UPF1. Not detected in complexes that contain unphosphorylated UPF1.

The protein resides in the cytoplasm. It is found in the nucleus. Plays a role in nonsense-mediated mRNA decay. Does not have RNase activity by itself. Promotes dephosphorylation of UPF1. Together with SMG7 is thought to provide a link to the mRNA degradation machinery involving exonucleolytic pathways, and to serve as an adapter for UPF1 to protein phosphatase 2A (PP2A), thereby triggering UPF1 dephosphorylation. Necessary for TERT activity. This chain is Nonsense-mediated mRNA decay factor SMG5, found in Mus musculus (Mouse).